Consider the following 178-residue polypeptide: MSGGKYVDSEGHLYTVPIREQGNIYKPNNKAMAEEMNEKQVYDAHTKEIDLVNRDPKHLNDDVVKIDFEDVIAEPEGTHSFDGIWKASFTTFTVTKYWFYRLLSALFGIPMALIWGIYFAILSFLHIWAVVPCIKSFLIEIQCISRVYSIYVHTFCDPLFEAIGKIFSNIRINTQKEI.

Ser-2 carries the post-translational modification N-acetylserine. Ser-2 bears the Phosphoserine mark. A required for homooligomerization region spans residues 2–94 (SGGKYVDSEG…WKASFTTFTV (93 aa)). Topologically, residues 2–104 (SGGKYVDSEG…TKYWFYRLLS (103 aa)) are cytoplasmic. Residue Lys-5 is modified to N6-acetyllysine; alternate. Lys-5 is covalently cross-linked (Glycyl lysine isopeptide (Lys-Gly) (interchain with G-Cter in ubiquitin); alternate). Tyr-6 carries the post-translational modification Phosphotyrosine. The residue at position 9 (Ser-9) is a Phosphoserine. At Tyr-14 the chain carries Phosphotyrosine; by ABL1. Tyr-25 is modified (phosphotyrosine). Glycyl lysine isopeptide (Lys-Gly) (interchain with G-Cter in ubiquitin) cross-links involve residues Lys-26, Lys-30, Lys-39, Lys-47, and Lys-57. An interaction with CAVIN3 region spans residues 82 to 94 (DGIWKASFTTFTV). The helical intramembrane region spans 105–125 (ALFGIPMALIWGIYFAILSFL). At 126–178 (HIWAVVPCIKSFLIEIQCISRVYSIYVHTFCDPLFEAIGKIFSNIRINTQKEI) the chain is on the cytoplasmic side. Residues 131–142 (VPCIKSFLIEIQ) form an interacts with SPRY1, SPRY2, SPRY3 and SPRY4 region. Residues Cys-133, Cys-143, and Cys-156 are each lipidated (S-palmitoyl cysteine). An interacts with SPRY1, SPRY2, and SPRY4 region spans residues 149–160 (SIYVHTFCDPLF). The segment at 167–178 (FSNIRINTQKEI) is interacts with SPRY1, SPRY2, SPRY3 and SPRY4.

This sequence belongs to the caveolin family. As to quaternary structure, homooligomer. Interacts with GLIPR2. Interacts with NOSTRIN. Interacts with SNAP25 and STX1A. Interacts (via the N-terminus) with DPP4; the interaction is direct. Interacts with CTNNB1, CDH1 and JUP. Interacts with PACSIN2; this interaction induces membrane tubulation. Interacts with SLC7A9. Interacts with BMX and BTK. Interacts with TGFBR1. Interacts with CAVIN3 (via leucine-zipper domain) in a cholesterol-sensitive manner. Interacts with CAVIN1. Interacts with EHD2 in a cholesterol-dependent manner. Forms a ternary complex with UBXN6 and VCP; mediates CAV1 targeting to lysosomes for degradation. Interacts with ABCG1; this interaction regulates ABCG1-mediated cholesterol efflux. Interacts with NEU3; this interaction enhances NEU3 sialidase activity within caveola. Interacts (via C-terminus) with SPRY1, SPRY2 (via C-terminus), SPRY3, and SPRY4. Interacts with IGFBP5; this interaction allows trafficking of IGFBP5 from the plasma membrane to the nucleus. Phosphorylated at Tyr-14 by ABL1 in response to oxidative stress. In terms of processing, ubiquitinated. Undergo monoubiquitination and multi- and/or polyubiquitination. Monoubiquitination of N-terminal lysines promotes integration in a ternary complex with UBXN6 and VCP which promotes oligomeric CAV1 targeting to lysosomes for degradation. Ubiquitinated by ZNRF1; leading to degradation and modulation of the TLR4-mediated immune response.

It localises to the golgi apparatus membrane. The protein localises to the cell membrane. Its subcellular location is the membrane. The protein resides in the caveola. It is found in the membrane raft. In terms of biological role, may act as a scaffolding protein within caveolar membranes. Forms a stable heterooligomeric complex with CAV2 that targets to lipid rafts and drives caveolae formation. Mediates the recruitment of CAVIN proteins (CAVIN1/2/3/4) to the caveolae. Interacts directly with G-protein alpha subunits and can functionally regulate their activity. Involved in the costimulatory signal essential for T-cell receptor (TCR)-mediated T-cell activation. Its binding to DPP4 induces T-cell proliferation and NF-kappa-B activation in a T-cell receptor/CD3-dependent manner. Recruits CTNNB1 to caveolar membranes and may regulate CTNNB1-mediated signaling through the Wnt pathway. Negatively regulates TGFB1-mediated activation of SMAD2/3 by mediating the internalization of TGFBR1 from membrane rafts leading to its subsequent degradation. Binds 20(S)-hydroxycholesterol (20(S)-OHC). In Bos taurus (Bovine), this protein is Caveolin-1 (CAV1).